The primary structure comprises 331 residues: Major outer membrane protein P.IB (331 aa).

A signal peptide spans 1 to 19; it reads MKKSLIALTLAALPVAAMA.

Belongs to the Gram-negative porin family. Homotrimer.

The protein resides in the cell outer membrane. Serves as a slightly cation selective porin. The protein is Major outer membrane protein P.IB (porB) of Neisseria meningitidis serogroup B (strain ATCC BAA-335 / MC58).